Reading from the N-terminus, the 208-residue chain is Small ribosomal subunit protein uS4 (208 aa).

The 61-residue stretch at 98-158 folds into the S4 RNA-binding domain; the sequence is GRLDNVVYRM…EKSKKQARIK (61 aa).

Belongs to the universal ribosomal protein uS4 family. As to quaternary structure, part of the 30S ribosomal subunit. Contacts protein S5. The interaction surface between S4 and S5 is involved in control of translational fidelity.

In terms of biological role, one of the primary rRNA binding proteins, it binds directly to 16S rRNA where it nucleates assembly of the body of the 30S subunit. Its function is as follows. With S5 and S12 plays an important role in translational accuracy. The chain is Small ribosomal subunit protein uS4 from Haemophilus ducreyi (strain 35000HP / ATCC 700724).